Reading from the N-terminus, the 887-residue chain is Dystrophin-like protein 1 (887 aa).

Residues 30-197 enclose the PID domain; the sequence is YQHGIHFEAK…KISMQSEDEA (168 aa). 2 stretches are compositionally biased toward basic and acidic residues: residues 176–186 and 205–216; these read MQEKHEDEAAK and IEERGGREEDSR. Disordered stretches follow at residues 176 to 254, 506 to 606, 641 to 753, 804 to 839, and 853 to 887; these read MQEK…GTAI, EIHH…QYER, QFDM…KNTA, IAEE…PPNT, and NVDR…GYPQ. A compositionally biased stretch (polar residues) spans 242–254; it reads KPSTTSSSGGTAI. Residues 434 to 506 adopt a coiled-coil conformation; it reads QLMRSQLDQA…QMLETKITSE (73 aa). The segment covering 510-519 has biased composition (low complexity); sequence SSSQPPQHQP. Positions 573 to 588 are enriched in basic and acidic residues; that stretch reads KESKERRKDEGTRTEP. The segment covering 597–606 has biased composition (polar residues); it reads DYSSSDQYER. Composition is skewed to polar residues over residues 816–827 and 863–887; these read NRNNLPSSTNSS and SLLT…GYPQ.

In terms of assembly, component of the dystrophin glycoprotein complex (DGC). Interacts with zyx-1. In terms of tissue distribution, expressed in muscles of the head, body wall and vulva. In some animals, weaker expression is observed in the intestinal muscles (at protein level). Isoform a is expressed in lateral neurons SDQL and SDQR.

Functionally, together with dys-1 and hlh-1, participates in a common muscular function. The sequence is that of Dystrophin-like protein 1 from Caenorhabditis elegans.